A 337-amino-acid chain; its full sequence is Phosphate acyltransferase (337 aa).

This sequence belongs to the PlsX family. As to quaternary structure, homodimer. Probably interacts with PlsY.

The protein localises to the cytoplasm. The catalysed reaction is a fatty acyl-[ACP] + phosphate = an acyl phosphate + holo-[ACP]. Its pathway is lipid metabolism; phospholipid metabolism. In terms of biological role, catalyzes the reversible formation of acyl-phosphate (acyl-PO(4)) from acyl-[acyl-carrier-protein] (acyl-ACP). This enzyme utilizes acyl-ACP as fatty acyl donor, but not acyl-CoA. The protein is Phosphate acyltransferase of Listeria welshimeri serovar 6b (strain ATCC 35897 / DSM 20650 / CCUG 15529 / CIP 8149 / NCTC 11857 / SLCC 5334 / V8).